The chain runs to 652 residues: ATP-dependent zinc metalloprotease FtsH (652 aa).

At 1-11 the chain is on the cytoplasmic side; it reads MKKQNNGLIKN. The chain crosses the membrane as a helical span at residues 12–32; that stretch reads PFLWLLFIFFLVTGFQYFYSG. The Extracellular segment spans residues 33 to 131; sequence NNSGGSQQIN…EVTVKHESSS (99 aa). The helical transmembrane segment at 132–152 threads the bilayer; it reads GIWINLLVSIVPFGILFFFLF. The Cytoplasmic segment spans residues 153–652; that stretch reads SMMGNMGGGN…EVKSKMNDEK (500 aa). Residue 227–234 participates in ATP binding; it reads GPPGTGKT. His-449 is a Zn(2+) binding site. Glu-450 is an active-site residue. Zn(2+) contacts are provided by His-453 and Asp-525. Residues 628 to 652 form a disordered region; the sequence is MPEAVEEESHALSYDEVKSKMNDEK. A compositionally biased stretch (basic and acidic residues) spans 634–652; sequence EESHALSYDEVKSKMNDEK.

The protein in the central section; belongs to the AAA ATPase family. This sequence in the C-terminal section; belongs to the peptidase M41 family. In terms of assembly, homohexamer. Zn(2+) is required as a cofactor.

It localises to the cell membrane. In terms of biological role, acts as a processive, ATP-dependent zinc metallopeptidase for both cytoplasmic and membrane proteins. Plays a role in the quality control of integral membrane proteins. The sequence is that of ATP-dependent zinc metalloprotease FtsH from Streptococcus pneumoniae serotype 4 (strain ATCC BAA-334 / TIGR4).